A 224-amino-acid polypeptide reads, in one-letter code: A-type ATP synthase subunit D (224 aa).

Over residues 200–209 (KKVKDKKEAQ) the composition is skewed to basic and acidic residues. Positions 200–224 (KKVKDKKEAQEEAADEAAAAESTGA) are disordered. A compositionally biased stretch (low complexity) spans 215-224 (EAAAAESTGA).

The protein belongs to the V-ATPase D subunit family. Has multiple subunits with at least A(3), B(3), C, D, E, F, H, I and proteolipid K(x).

Its subcellular location is the cell membrane. Component of the A-type ATP synthase that produces ATP from ADP in the presence of a proton gradient across the membrane. The protein is A-type ATP synthase subunit D of Halobacterium salinarum (strain ATCC 29341 / DSM 671 / R1).